A 445-amino-acid chain; its full sequence is Glutamate--tRNA ligase 2 (445 aa).

Positions 10–20 (PSPTGMLHVGN) match the 'HIGH' region motif. A 'KMSKS' region motif is present at residues 240 to 244 (KISKR). K243 contributes to the ATP binding site.

The protein belongs to the class-I aminoacyl-tRNA synthetase family. Glutamate--tRNA ligase type 1 subfamily. In terms of assembly, monomer.

The protein resides in the cytoplasm. It carries out the reaction tRNA(Glu) + L-glutamate + ATP = L-glutamyl-tRNA(Glu) + AMP + diphosphate. Catalyzes the attachment of glutamate to tRNA(Glu) in a two-step reaction: glutamate is first activated by ATP to form Glu-AMP and then transferred to the acceptor end of tRNA(Glu). In Rickettsia canadensis (strain McKiel), this protein is Glutamate--tRNA ligase 2.